The following is a 675-amino-acid chain: MPHSIETQLEHLREKLREYEYHYHVLDNPLVPDAEYDRLMNELKNLEWQHPELITSDSPTQRVGAKPLDGFAQITHEIPMLSLDNAFSDDDLTGFLRRIEDRIAINSNQIEFCCEPKLDGLAVSILYVDGVLTQAATRGDGTTGEDITANIRTIRNIPLKLKTNNPPHRLEVRGEVFMPQQGFEQLNEKALAKGEKTFANPRNAAAGSLRQLDPKITSQRPLMLNAYNIGVYESDDELPTTHFDRLQWLKTLGIPVNAEITLATGSQALTAFYQKIQAKRSSLGYDIDGTVLKVNEITLQEQLGFISKAPRWAIAYKFPAQEEMTILNDVEFQVGRTGAITPVAKLEPVFVAGVTVSNATLHNGDEIERLGIAIGDTVIIRRAGDVIPQIVGVVAERRPDNAKKIAFPTACPVCNSAVVRVEGEAVARCTGGLFCGAQRKEALKHFVSRKAMDIDGVGEKLIEQLMERELIHTPADLFKLDHTTLMRLDRMGEKSANNALQSIEKAKNTTLARFLFALGIRDVGESTAQNLANHFGTLDAIRQADLDTLKQVQDVGEVVANRLFQFWQEPHNVEVVEDLIAQGVTWQDVVPQEIADNPLKDKTVVLTGTLTQLTRDQAKALLQQLGCKVSGSVSSKTDYLIAGEKAGSKLAKAQELGVKILSEDELIGYFTTIVS.

NAD(+) contacts are provided by residues 33–37 (DAEYD), 82–83 (SL), and glutamate 115. Lysine 117 acts as the N6-AMP-lysine intermediate in catalysis. NAD(+) is bound by residues arginine 138, glutamate 175, lysine 293, and lysine 317. The Zn(2+) site is built by cysteine 411, cysteine 414, cysteine 429, and cysteine 435. A BRCT domain is found at 594–675 (IADNPLKDKT…LIGYFTTIVS (82 aa)).

This sequence belongs to the NAD-dependent DNA ligase family. LigA subfamily. The cofactor is Mg(2+). It depends on Mn(2+) as a cofactor.

The enzyme catalyses NAD(+) + (deoxyribonucleotide)n-3'-hydroxyl + 5'-phospho-(deoxyribonucleotide)m = (deoxyribonucleotide)n+m + AMP + beta-nicotinamide D-nucleotide.. Its function is as follows. DNA ligase that catalyzes the formation of phosphodiester linkages between 5'-phosphoryl and 3'-hydroxyl groups in double-stranded DNA using NAD as a coenzyme and as the energy source for the reaction. It is essential for DNA replication and repair of damaged DNA. The sequence is that of DNA ligase from Glaesserella parasuis serovar 5 (strain SH0165) (Haemophilus parasuis).